The primary structure comprises 132 residues: Small ribosomal subunit protein uS8 (132 aa).

This sequence belongs to the universal ribosomal protein uS8 family. As to quaternary structure, part of the 30S ribosomal subunit. Contacts proteins S5 and S12.

Its function is as follows. One of the primary rRNA binding proteins, it binds directly to 16S rRNA central domain where it helps coordinate assembly of the platform of the 30S subunit. This is Small ribosomal subunit protein uS8 from Gluconacetobacter diazotrophicus (strain ATCC 49037 / DSM 5601 / CCUG 37298 / CIP 103539 / LMG 7603 / PAl5).